The sequence spans 512 residues: Respiratory nitrate reductase 1 beta chain (512 aa).

4Fe-4S ferredoxin-type domains lie at V7–G35, T175–E206, and G208–K237. [4Fe-4S] cluster is bound by residues C16, C19, C22, C26, C184, C187, and C192. The [3Fe-4S] cluster site is built by C196, C217, and C223. Residues C227, C244, C247, C259, and C263 each contribute to the [4Fe-4S] cluster site.

Dimer of heterotrimers each composed of an alpha, a beta and a gamma chain. Alpha and beta are catalytic chains; gamma chains are involved in binding the enzyme complex to the cytoplasmic membrane. Requires [4Fe-4S] cluster as cofactor. The cofactor is [3Fe-4S] cluster.

It localises to the cell membrane. The enzyme catalyses nitrate + a quinol = a quinone + nitrite + H2O. The nitrate reductase enzyme complex allows S.flexneri to use nitrate as an electron acceptor during anaerobic growth. The beta chain is an electron transfer unit containing four cysteine clusters involved in the formation of iron-sulfur centers. Electrons are transferred from the gamma chain to the molybdenum cofactor of the alpha subunit. The sequence is that of Respiratory nitrate reductase 1 beta chain (narH) from Shigella flexneri.